Reading from the N-terminus, the 431-residue chain is Adenylosuccinate synthetase (431 aa).

GTP-binding positions include 12-18 (GDEGKGK) and 40-42 (GHT). The active-site Proton acceptor is D13. Mg(2+) is bound by residues D13 and G40. IMP is bound by residues 13 to 16 (DEGK), 38 to 41 (NAGH), T131, R145, Q225, T240, and R304. H41 (proton donor) is an active-site residue. 300 to 306 (VNTGRRR) contacts substrate. GTP contacts are provided by residues R306, 332-334 (KLD), and 414-416 (STS).

It belongs to the adenylosuccinate synthetase family. As to quaternary structure, homodimer. It depends on Mg(2+) as a cofactor.

The protein resides in the cytoplasm. It catalyses the reaction IMP + L-aspartate + GTP = N(6)-(1,2-dicarboxyethyl)-AMP + GDP + phosphate + 2 H(+). Its pathway is purine metabolism; AMP biosynthesis via de novo pathway; AMP from IMP: step 1/2. Plays an important role in the de novo pathway of purine nucleotide biosynthesis. Catalyzes the first committed step in the biosynthesis of AMP from IMP. In Beijerinckia indica subsp. indica (strain ATCC 9039 / DSM 1715 / NCIMB 8712), this protein is Adenylosuccinate synthetase.